We begin with the raw amino-acid sequence, 459 residues long: Trigger factor (459 aa).

The PPIase FKBP-type domain occupies 166-245 (GDFANIDLTA…VNSVKAEELP (80 aa)).

The protein belongs to the FKBP-type PPIase family. Tig subfamily.

The protein resides in the cytoplasm. The enzyme catalyses [protein]-peptidylproline (omega=180) = [protein]-peptidylproline (omega=0). Functionally, involved in protein export. Acts as a chaperone by maintaining the newly synthesized protein in an open conformation. Functions as a peptidyl-prolyl cis-trans isomerase. The polypeptide is Trigger factor (Bifidobacterium longum subsp. infantis (strain ATCC 15697 / DSM 20088 / JCM 1222 / NCTC 11817 / S12)).